The primary structure comprises 359 residues: S-adenosylmethionine:tRNA ribosyltransferase-isomerase (359 aa).

The protein belongs to the QueA family. As to quaternary structure, monomer.

It is found in the cytoplasm. It catalyses the reaction 7-aminomethyl-7-carbaguanosine(34) in tRNA + S-adenosyl-L-methionine = epoxyqueuosine(34) in tRNA + adenine + L-methionine + 2 H(+). It participates in tRNA modification; tRNA-queuosine biosynthesis. In terms of biological role, transfers and isomerizes the ribose moiety from AdoMet to the 7-aminomethyl group of 7-deazaguanine (preQ1-tRNA) to give epoxyqueuosine (oQ-tRNA). The chain is S-adenosylmethionine:tRNA ribosyltransferase-isomerase from Colwellia psychrerythraea (strain 34H / ATCC BAA-681) (Vibrio psychroerythus).